The chain runs to 78 residues: Large ribosomal subunit protein bL28 (78 aa).

The protein belongs to the bacterial ribosomal protein bL28 family.

The polypeptide is Large ribosomal subunit protein bL28 (Hydrogenovibrio crunogenus (strain DSM 25203 / XCL-2) (Thiomicrospira crunogena)).